A 150-amino-acid chain; its full sequence is UPF0756 membrane protein HAPS_1649 (150 aa).

Helical transmembrane passes span 1–21, 27–46, 52–72, 82–102, and 123–143; these read MSLQ…LGIF, VTIS…SKYV, YGIK…LVSG, LINW…WLGG, and IIGV…AGIL.

Belongs to the UPF0756 family.

The protein resides in the cell membrane. The polypeptide is UPF0756 membrane protein HAPS_1649 (Glaesserella parasuis serovar 5 (strain SH0165) (Haemophilus parasuis)).